We begin with the raw amino-acid sequence, 332 residues long: Large ribosomal subunit protein uL10 (332 aa).

Residues 294–332 (QAAAAPVAVEDNTEEPEEEEEEEEDAAESAAAGLGALFG) form a disordered region. Over residues 304-320 (DNTEEPEEEEEEEEDAA) the composition is skewed to acidic residues.

The protein belongs to the universal ribosomal protein uL10 family. In terms of assembly, part of the 50S ribosomal subunit. Forms part of the ribosomal stalk which helps the ribosome interact with GTP-bound translation factors. Forms a heptameric L10(L12)2(L12)2(L12)2 complex, where L10 forms an elongated spine to which the L12 dimers bind in a sequential fashion.

Forms part of the ribosomal stalk, playing a central role in the interaction of the ribosome with GTP-bound translation factors. The protein is Large ribosomal subunit protein uL10 of Methanosphaera stadtmanae (strain ATCC 43021 / DSM 3091 / JCM 11832 / MCB-3).